The chain runs to 76 residues: Small ribosomal subunit protein bS18 (76 aa).

Belongs to the bacterial ribosomal protein bS18 family. In terms of assembly, part of the 30S ribosomal subunit. Forms a tight heterodimer with protein bS6.

Binds as a heterodimer with protein bS6 to the central domain of the 16S rRNA, where it helps stabilize the platform of the 30S subunit. This Pseudomonas aeruginosa (strain LESB58) protein is Small ribosomal subunit protein bS18.